An 883-amino-acid polypeptide reads, in one-letter code: Alanine--tRNA ligase (883 aa).

Zn(2+) is bound by residues His560, His564, Cys665, and His669.

Belongs to the class-II aminoacyl-tRNA synthetase family. It depends on Zn(2+) as a cofactor.

Its subcellular location is the cytoplasm. The catalysed reaction is tRNA(Ala) + L-alanine + ATP = L-alanyl-tRNA(Ala) + AMP + diphosphate. Catalyzes the attachment of alanine to tRNA(Ala) in a two-step reaction: alanine is first activated by ATP to form Ala-AMP and then transferred to the acceptor end of tRNA(Ala). Also edits incorrectly charged Ser-tRNA(Ala) and Gly-tRNA(Ala) via its editing domain. The chain is Alanine--tRNA ligase from Mesomycoplasma hyopneumoniae (strain 7448) (Mycoplasma hyopneumoniae).